Here is a 367-residue protein sequence, read N- to C-terminus: MNSSQTLVIKLGTSVLTGGSRRLNRAHIVELVRQCAPLHAAGHRIIIVTSGAIAAGREYLNYPELPATIASKQLLAAVGQSRLIQFWEQLFSLYNIHIGQMLLTRADMEDRERFLNARDTLRALLDNGIVPVINENDAVATAEIKVGDNDNLSALVAILADADKLLLLTDQPGLFSADPRTNPDAELIREVEGINDALRKMAGGSVSGLGTGGMETKLQAAEVANRAGIEVVIAAGGKPGVIGDMMAGASVGTRFHGQKMPLESRKRWLFGPPPAGDITVDDGALKAILQRGSSLLPKGILAVEGDFSRGIVVRIRSTDGRDIAHGVSRYNSDALRMIAGHHSQDISDILGYEYGPVVIHRDDMILC.

Lys10 serves as a coordination point for ATP. Positions 50, 137, and 149 each coordinate substrate. ATP is bound by residues Thr169–Asp170 and Thr211–Lys217. The PUA domain maps to Ala275–Glu353.

The protein belongs to the glutamate 5-kinase family.

The protein localises to the cytoplasm. It carries out the reaction L-glutamate + ATP = L-glutamyl 5-phosphate + ADP. It functions in the pathway amino-acid biosynthesis; L-proline biosynthesis; L-glutamate 5-semialdehyde from L-glutamate: step 1/2. Catalyzes the transfer of a phosphate group to glutamate to form L-glutamate 5-phosphate. This is Glutamate 5-kinase from Sodalis glossinidius (strain morsitans).